We begin with the raw amino-acid sequence, 99 residues long: MNTIQVIIFAVVLVLTVTVGQADEDSAETSLLRKLKEAEASLFGQHLEESQHSREKRCLGENVPCDKDRPNCCSRYECLEPTGYGWWYASYYCYKKRSG.

An N-terminal signal peptide occupies residues methionine 1–alanine 22. The propeptide occupies aspartate 23–arginine 57. Disulfide bonds link cysteine 58–cysteine 73, cysteine 65–cysteine 78, and cysteine 72–cysteine 93. A Serine amide modification is found at serine 98.

It belongs to the neurotoxin 14 (magi-1) family. 08 (Ltx-4) subfamily. In terms of tissue distribution, expressed by the venom gland.

The protein localises to the secreted. Functionally, insecticidal toxin that shows strong lethal effects on American cockroaches (P.americana) and common mealbeetle (T.molitor). Possibly acts by blocking ion channel currents. Also shows significant analgesic effects in mice models of pain including abdominal writhing induced by acetic acid and formalin-induced paw licking tests. In addition, exerts marked inhibition of proliferation of some human tumor cell lines including C8166, Molt-4, A-549, BIU-87, T24, and Calu-6. The polypeptide is U1-theraphotoxin-Tal1a (Tliltocatl albopilosus (Curlyhair tarantula)).